The chain runs to 146 residues: Angiogenin (146 aa).

The first 24 residues, 1 to 24, serve as a signal peptide directing secretion; sequence MVMGLGLFLLVFMLGLGLTPPTLA. At Q25 the chain carries Pyrrolidone carboxylic acid. H37 serves as the catalytic Proton acceptor. R45 provides a ligand contact to tRNA. Intrachain disulfides connect C50/C105, C63/C116, and C81/C131. The Nucleolar localization signal signature appears at 55 to 59; it reads RRRGL. TRNA contacts are provided by C105 and I127. The Proton donor role is filled by H138.

The protein belongs to the pancreatic ribonuclease family. In terms of assembly, homodimer. Interacts with RNH1; inhibiting ANG ribonuclease activity. Interacts with PCNA.

The protein resides in the secreted. The protein localises to the nucleus. It localises to the nucleolus. Its subcellular location is the cytoplasm. It is found in the stress granule. Its activity is regulated as follows. Has weak tRNA ribonuclease activity by itself due to partial autoinhibition by its C-terminus, which folds into a short alpha-helix that partially occludes the substrate-binding site. In absence of stress, the ribonuclease activity is inhibited by RNH1 in the cytoplasm. In response to stress, dissociates from RNH1 in the cytoplasm and associates with cytoplasmic ribosomes with vacant A-sites: ribosomes directly activate the tRNA ribonuclease activity of ANG by refolding the C-terminal alpha-helix. In response to stress, the angiogenic activity of ANG is inhibited by RNH1 in the nucleus. In terms of biological role, secreted ribonuclease that can either promote or restrict cell proliferation of target cells, depending on the context. Endocytosed in target cells via its receptor PLXNB2 and translocates to the cytoplasm or nucleus. Under stress conditions, localizes to the cytoplasm and promotes the assembly of stress granules (SGs): specifically cleaves a subset of tRNAs within anticodon loops to produce tRNA-derived stress-induced fragments (tiRNAs), resulting in translation repression and inhibition of cell proliferation. tiRNas also prevent formation of apoptosome, thereby promoting cell survival. Preferentially cleaves RNAs between a pyrimidine and an adenosine residue, suggesting that it cleaves the anticodon loop of tRNA(Ala) (32-UUAGCAU-38) after positions 33 and 36. Cleaves a subset of tRNAs, including tRNA(Ala), tRNA(Glu), tRNA(Gly), tRNA(Lys), tRNA(Val), tRNA(His), tRNA(Asp) and tRNA(Sec). Under growth conditions and in differentiated cells, translocates to the nucleus and stimulates ribosomal RNA (rRNA) transcription, including that containing the initiation site sequences of 45S rRNA, thereby promoting cell growth and proliferation. Angiogenin induces vascularization of normal and malignant tissues via its ability to promote rRNA transcription. Involved in hematopoietic stem and progenitor cell (HSPC) growth and survival by promoting rRNA transcription in growth conditions and inhibiting translation in response to stress, respectively. Mediates the crosstalk between myeloid and intestinal epithelial cells to protect the intestinal epithelial barrier integrity: secreted by myeloid cells and promotes intestinal epithelial cells proliferation and survival. Also mediates osteoclast-endothelial cell crosstalk in growing bone: produced by osteoclasts and protects the neighboring vascular cells against senescence by promoting rRNA transcription. In Trachypithecus francoisi (Francois' leaf monkey), this protein is Angiogenin (ANG).